A 142-amino-acid polypeptide reads, in one-letter code: Hemoglobin subunit alpha (142 aa).

The region spanning 2–142 is the Globin domain; the sequence is VLSDADKTHV…VATVLTSKYR (141 aa). S4 is subject to Phosphoserine. Position 8 is an N6-succinyllysine (K8). At T9 the chain carries Phosphothreonine. K12 is subject to N6-succinyllysine. At K17 the chain carries N6-acetyllysine; alternate. Residue K17 is modified to N6-succinyllysine; alternate. Y25 is subject to Phosphotyrosine. At S36 the chain carries Phosphoserine. K41 bears the N6-succinyllysine mark. A Phosphoserine modification is found at S50. H59 is an O2 binding site. Residue H88 participates in heme b binding. S103 is subject to Phosphoserine. T109 carries the post-translational modification Phosphothreonine. Residues S125 and S132 each carry the phosphoserine modification. A phosphothreonine mark is found at T135 and T138. Position 139 is a phosphoserine (S139).

The protein belongs to the globin family. As to quaternary structure, heterotetramer of two alpha chains and two beta chains. Red blood cells.

Involved in oxygen transport from the lung to the various peripheral tissues. Its function is as follows. Hemopressin acts as an antagonist peptide of the cannabinoid receptor CNR1. Hemopressin-binding efficiently blocks cannabinoid receptor CNR1 and subsequent signaling. The protein is Hemoglobin subunit alpha (HBA) of Dasyurus viverrinus (Eastern quoll).